Here is a 231-residue protein sequence, read N- to C-terminus: Ribonuclease 3 (231 aa).

The RNase III domain maps to 3 to 130 (MHEFFENFGI…VTAAIYLDQT (128 aa)). Glu-43 serves as a coordination point for Mg(2+). Residue Asp-47 is part of the active site. Residues Asp-116 and Glu-119 each coordinate Mg(2+). Residue Glu-119 is part of the active site. Positions 157–228 (DYKSELQEII…AKDCLNKLKK (72 aa)) constitute a DRBM domain.

The protein belongs to the ribonuclease III family. As to quaternary structure, homodimer. Mg(2+) serves as cofactor.

Its subcellular location is the cytoplasm. It catalyses the reaction Endonucleolytic cleavage to 5'-phosphomonoester.. Functionally, digests double-stranded RNA. Involved in the processing of primary rRNA transcript to yield the immediate precursors to the large and small rRNAs (23S and 16S). Processes some mRNAs, and tRNAs when they are encoded in the rRNA operon. Processes pre-crRNA and tracrRNA of type II CRISPR loci if present in the organism. The chain is Ribonuclease 3 from Mesoplasma florum (strain ATCC 33453 / NBRC 100688 / NCTC 11704 / L1) (Acholeplasma florum).